We begin with the raw amino-acid sequence, 394 residues long: 8-amino-7-oxononanoate synthase (394 aa).

Arg-21 lines the substrate pocket. A pyridoxal 5'-phosphate-binding site is contributed by 112–113 (GY). Position 137 (His-137) interacts with substrate. Pyridoxal 5'-phosphate contacts are provided by Ser-183, His-211, and Thr-239. Lys-242 is modified (N6-(pyridoxal phosphate)lysine). Thr-358 provides a ligand contact to substrate.

Belongs to the class-II pyridoxal-phosphate-dependent aminotransferase family. BioF subfamily. In terms of assembly, homodimer. Requires pyridoxal 5'-phosphate as cofactor.

The enzyme catalyses 6-carboxyhexanoyl-[ACP] + L-alanine + H(+) = (8S)-8-amino-7-oxononanoate + holo-[ACP] + CO2. It participates in cofactor biosynthesis; biotin biosynthesis. In terms of biological role, catalyzes the decarboxylative condensation of pimeloyl-[acyl-carrier protein] and L-alanine to produce 8-amino-7-oxononanoate (AON), [acyl-carrier protein], and carbon dioxide. The chain is 8-amino-7-oxononanoate synthase from Paraburkholderia phymatum (strain DSM 17167 / CIP 108236 / LMG 21445 / STM815) (Burkholderia phymatum).